The chain runs to 137 residues: Small ribosomal subunit protein uS19 (137 aa).

Residues 115–137 form a disordered region; the sequence is RNRVSHGSAGVGATRSSKFVPLK.

This sequence belongs to the universal ribosomal protein uS19 family.

In terms of biological role, protein S19 forms a complex with S13 that binds strongly to the 16S ribosomal RNA. This chain is Small ribosomal subunit protein uS19, found in Methanococcoides burtonii (strain DSM 6242 / NBRC 107633 / OCM 468 / ACE-M).